Consider the following 254-residue polypeptide: MDRVKLTGVVLRAVDYGESDRVVTLLTAERGKVSAFARGARASRRRFGGALEPFTLLSAEVRERSGSDLLGLDSVSVVRGFGALRGDLGRIACAGYAAELARELVRDHQPHDELFDLLVAYLGALDAAPPRPAALRAFELGALRAAGLMPRLDACARCGAPVGEGPVRFDAGEGGALCGGCAPGVPRTLPLAAGTLAALLRLQEGGLAAAASEPLAAPAGREAREALTAFLEHHLGRRLAARRFLDEIGPLLGG.

Belongs to the RecO family.

Functionally, involved in DNA repair and RecF pathway recombination. The sequence is that of DNA repair protein RecO from Anaeromyxobacter dehalogenans (strain 2CP-C).